A 474-amino-acid polypeptide reads, in one-letter code: Bifunctional protein HldE (474 aa).

Residues 1–318 (MKLSMPRFDQ…RAVQREQGSE (318 aa)) form a ribokinase region. Residue 194-197 (NLSE) participates in ATP binding. Asp-263 is an active-site residue. Residues 343–474 (FTNGCFDILH…AIVEKIRQKG (132 aa)) are cytidylyltransferase.

The protein in the N-terminal section; belongs to the carbohydrate kinase PfkB family. It in the C-terminal section; belongs to the cytidylyltransferase family. In terms of assembly, homodimer.

The catalysed reaction is D-glycero-beta-D-manno-heptose 7-phosphate + ATP = D-glycero-beta-D-manno-heptose 1,7-bisphosphate + ADP + H(+). The enzyme catalyses D-glycero-beta-D-manno-heptose 1-phosphate + ATP + H(+) = ADP-D-glycero-beta-D-manno-heptose + diphosphate. It participates in nucleotide-sugar biosynthesis; ADP-L-glycero-beta-D-manno-heptose biosynthesis; ADP-L-glycero-beta-D-manno-heptose from D-glycero-beta-D-manno-heptose 7-phosphate: step 1/4. Its pathway is nucleotide-sugar biosynthesis; ADP-L-glycero-beta-D-manno-heptose biosynthesis; ADP-L-glycero-beta-D-manno-heptose from D-glycero-beta-D-manno-heptose 7-phosphate: step 3/4. Catalyzes the phosphorylation of D-glycero-D-manno-heptose 7-phosphate at the C-1 position to selectively form D-glycero-beta-D-manno-heptose-1,7-bisphosphate. In terms of biological role, catalyzes the ADP transfer from ATP to D-glycero-beta-D-manno-heptose 1-phosphate, yielding ADP-D-glycero-beta-D-manno-heptose. The sequence is that of Bifunctional protein HldE from Pseudomonas paraeruginosa (strain DSM 24068 / PA7) (Pseudomonas aeruginosa (strain PA7)).